Reading from the N-terminus, the 210-residue chain is Somatotropin (210 aa).

Positions 1–23 (MARVLVLLSVVLVSLLVNQGRAS) are cleaved as a signal peptide. H38 serves as a coordination point for Zn(2+). C71 and C183 are oxidised to a cystine. E192 lines the Zn(2+) pocket. An intrachain disulfide couples C200 to C208.

It belongs to the somatotropin/prolactin family.

The protein localises to the secreted. In terms of biological role, growth hormone plays an important role in growth control. The protein is Somatotropin (gh) of Cyprinus carpio (Common carp).